The primary structure comprises 495 residues: Cytochrome P450 2E1 (495 aa).

A substrate-binding site is contributed by 298–303 (FAGTET). Residue C437 participates in heme binding.

Belongs to the cytochrome P450 family. In terms of assembly, interacts with chaperones HSP70 and HSP90; this interaction is required for initial targeting to mitochondria. Heme is required as a cofactor.

Its subcellular location is the endoplasmic reticulum membrane. It localises to the microsome membrane. The protein resides in the mitochondrion inner membrane. The catalysed reaction is an organic molecule + reduced [NADPH--hemoprotein reductase] + O2 = an alcohol + oxidized [NADPH--hemoprotein reductase] + H2O + H(+). It carries out the reaction (5Z,8Z,11Z)-eicosatrienoate + reduced [NADPH--hemoprotein reductase] + O2 = 19-hydroxy-(5Z,8Z,11Z)-eicosatrienoate + oxidized [NADPH--hemoprotein reductase] + H2O + H(+). It catalyses the reaction (5Z,8Z,11Z,14Z,17Z)-eicosapentaenoate + reduced [NADPH--hemoprotein reductase] + O2 = 19-hydroxy-(5Z,8Z,11Z,14Z,17Z)-eicosapentaenoate + oxidized [NADPH--hemoprotein reductase] + H2O + H(+). The enzyme catalyses (4Z,7Z,10Z,13Z,16Z,19Z)-docosahexaenoate + reduced [NADPH--hemoprotein reductase] + O2 = 21-hydroxy-(4Z,7Z,10Z,13Z,16Z,19Z)-docosahexaenoate + oxidized [NADPH--hemoprotein reductase] + H2O + H(+). The catalysed reaction is dodecanoate + reduced [NADPH--hemoprotein reductase] + O2 = 11-hydroxydodecanoate + oxidized [NADPH--hemoprotein reductase] + H2O + H(+). It carries out the reaction tetradecanoate + reduced [NADPH--hemoprotein reductase] + O2 = 13-hydroxytetradecanoate + oxidized [NADPH--hemoprotein reductase] + H2O + H(+). It catalyses the reaction 4-nitrophenol + NADPH + O2 + H(+) = 4-nitrocatechol + NADP(+) + H2O. Its pathway is lipid metabolism; fatty acid metabolism. Its activity is regulated as follows. The omega-1 hydroxylase activity is stimulated by cytochrome b5. A cytochrome P450 monooxygenase involved in the metabolism of fatty acids. Mechanistically, uses molecular oxygen inserting one oxygen atom into a substrate, and reducing the second into a water molecule, with two electrons provided by NADPH via cytochrome P450 reductase (NADPH--hemoprotein reductase). Catalyzes the hydroxylation of carbon-hydrogen bonds. Hydroxylates fatty acids specifically at the omega-1 position displaying the highest catalytic activity for saturated fatty acids. May be involved in the oxidative metabolism of xenobiotics. The protein is Cytochrome P450 2E1 (CYP2E1) of Bos taurus (Bovine).